Consider the following 1087-residue polypeptide: Ubiquitin-associated protein 2-like (1087 aa).

M1 carries the post-translational modification N-acetylmethionine. The interval 1 to 33 (MMTSVGTNRARGNWEQPQNQNQTQHKQRPQATA) is disordered. Positions 49–89 (DFEEKVKQLIDITGKNQDECVIALHDCNGDVNRAINVLLEG) constitute a UBA domain. The interval 92–234 (DTHSWEMVGK…TGHFEPDDGT (143 aa)) is disordered. A compositionally biased stretch (basic and acidic residues) spans 118–132 (EEGKENRDRDRDYSR). Positions 133-145 (RRGGPPRRGRGAS) are enriched in basic residues. Asymmetric dimethylarginine is present on residues R187 and R190. Positions 213–226 (NYGNSSGNTWNNTG) are enriched in low complexity. S356 and S360 each carry phosphoserine. A compositionally biased stretch (low complexity) spans 377-389 (AQHSQSGSTTTSS). The disordered stretch occupies residues 377–420 (AQHSQSGSTTTSSWDMGSTTQSPSLVQYDLKNPSDSAVHSPFTK). Polar residues predominate over residues 390–401 (WDMGSTTQSPSL). Residues S410 and S416 each carry the phosphoserine modification. T425 carries the phosphothreonine modification. Phosphoserine occurs at positions 439, 454, 467, 470, 471, and 477. 3 disordered regions span residues 440–493 (PAVA…KKAS), 530–656 (SDYE…IPPL), and 669–794 (TNQH…LPPG). Low complexity-rich tracts occupy residues 474 to 485 (QSSSPQPAQQKL) and 534 to 569 (STPTTSASSSQAPSSLYTSTASESSSTISSNQSQES). The segment covering 570 to 656 (GYQSGPIQST…SPSTSSIPPL (87 aa)) has biased composition (polar residues). Phosphoserine is present on residues S604, S605, S608, and S609. Over residues 688-784 (TTTTQHSSTL…STRSSVATTS (97 aa)) the composition is skewed to low complexity. S852 and S859 each carry phosphoserine. The segment at 865–901 (FGRGDASSPAPATTLAQPQQNQTQTHHTTQQTFLNPA) is disordered. Residues 873–896 (PAPATTLAQPQQNQTQTHHTTQQT) are compositionally biased toward low complexity. Omega-N-methylarginine is present on residues S962 and V969. An N6-acetyllysine mark is found at V969 and T976. The interval 1040–1087 (QQPHSQILHHHLQQDGQTGSGQRSQTSSIPQKPQTNKSAYNSYSWGAN) is disordered. The segment covering 1053–1067 (QDGQTGSGQRSQTSS) has biased composition (low complexity). The segment covering 1068-1087 (IPQKPQTNKSAYNSYSWGAN) has biased composition (polar residues).

As to quaternary structure, interacts with BMI1. Part of a complex consisting of UBAP2L, BMI1 and RNF2. Interacts with G3BP1 (via NTF2 domain); promoting stress granule formation. Post-translationally, acetylated. In terms of tissue distribution, ubiquitous.

It is found in the nucleus. Its subcellular location is the chromosome. It localises to the cytoplasm. The protein resides in the stress granule. Recruits the ubiquitination machinery to RNA polymerase II for polyubiquitination, removal and degradation, when the transcription-coupled nucleotide excision repair (TC-NER) machinery fails to resolve DNA damage. Plays an important role in the activity of long-term repopulating hematopoietic stem cells (LT-HSCs). Is a regulator of stress granule assembly, required for their efficient formation. Required for proper brain development and neocortex lamination. The sequence is that of Ubiquitin-associated protein 2-like from Homo sapiens (Human).